Reading from the N-terminus, the 180-residue chain is Translation initiation factor IF-3 (180 aa).

Belongs to the IF-3 family. As to quaternary structure, monomer.

It localises to the cytoplasm. IF-3 binds to the 30S ribosomal subunit and shifts the equilibrium between 70S ribosomes and their 50S and 30S subunits in favor of the free subunits, thus enhancing the availability of 30S subunits on which protein synthesis initiation begins. This chain is Translation initiation factor IF-3, found in Salmonella typhi.